A 160-amino-acid polypeptide reads, in one-letter code: Inner membrane protein YcdZ (160 aa).

Helical transmembrane passes span 20 to 42 (WGAV…YFAC), 50 to 70 (LLIS…IIHG), 72 to 92 (ALAP…AFLM), 99 to 119 (LLLS…AGQG), and 123 to 143 (LVLP…NSGL).

To E.coli YahC.

The protein resides in the cell inner membrane. This Salmonella typhimurium (strain LT2 / SGSC1412 / ATCC 700720) protein is Inner membrane protein YcdZ (ycdZ).